The sequence spans 265 residues: Small ribosomal subunit protein uS2 (265 aa).

Belongs to the universal ribosomal protein uS2 family.

The polypeptide is Small ribosomal subunit protein uS2 (Aliarcobacter butzleri (strain RM4018) (Arcobacter butzleri)).